We begin with the raw amino-acid sequence, 296 residues long: MTDPLSIAPRDQAEILARALPYIRRFHGKTMVIKYGGNAMTDPALQADFAEDVVLLKLVGMNPVVVHGGGPQIETALNRLGKKGVFIQGMRVTDAETMEVVEWVLAGQVQQDIVGLINQAGGKAVGLTGRDGAMIRAQKLKMVDSKDSSIEHDIGQVGDIVSIDPSVVKALQDDAFIPVISPIGFGENNESYNINADVVASKLATVLQAQKLVLLTNTPGVLDKKGNLLTDLTAREIDALFADGTISGGMLPKIAGALDAAKAGVHAVHIIDGRVPHAMLLEILTDQAFGTMIRSH.

Residues 69–70, arginine 91, and asparagine 193 each bind substrate; that span reads GG.

This sequence belongs to the acetylglutamate kinase family. ArgB subfamily.

It localises to the cytoplasm. The catalysed reaction is N-acetyl-L-glutamate + ATP = N-acetyl-L-glutamyl 5-phosphate + ADP. The protein operates within amino-acid biosynthesis; L-arginine biosynthesis; N(2)-acetyl-L-ornithine from L-glutamate: step 2/4. In terms of biological role, catalyzes the ATP-dependent phosphorylation of N-acetyl-L-glutamate. This is Acetylglutamate kinase from Verminephrobacter eiseniae (strain EF01-2).